Consider the following 224-residue polypeptide: Aminopyrimidine aminohydrolase (224 aa).

Residue aspartate 44 participates in substrate binding. Cysteine 135 (nucleophile) is an active-site residue. The substrate site is built by tyrosine 139 and tyrosine 165. Glutamate 207 (proton donor) is an active-site residue.

Belongs to the TenA family. As to quaternary structure, homotetramer.

It carries out the reaction 4-amino-5-aminomethyl-2-methylpyrimidine + H2O = 4-amino-5-hydroxymethyl-2-methylpyrimidine + NH4(+). It catalyses the reaction thiamine + H2O = 5-(2-hydroxyethyl)-4-methylthiazole + 4-amino-5-hydroxymethyl-2-methylpyrimidine + H(+). It participates in cofactor biosynthesis; thiamine diphosphate biosynthesis. Catalyzes an amino-pyrimidine hydrolysis reaction at the C5' of the pyrimidine moiety of thiamine compounds, a reaction that is part of a thiamine salvage pathway. Thus, catalyzes the conversion of 4-amino-5-aminomethyl-2-methylpyrimidine to 4-amino-5-hydroxymethyl-2-methylpyrimidine (HMP). To a lesser extent, is also able to catalyze the hydrolytic cleavage of thiamine; however, this thiaminase activity is unlikely to be physiologically relevant. Therefore, is involved in the regeneration of the thiamine pyrimidine from thiamine degraded products present in the environment, rather than in thiamine degradation. The sequence is that of Aminopyrimidine aminohydrolase from Halalkalibacterium halodurans (strain ATCC BAA-125 / DSM 18197 / FERM 7344 / JCM 9153 / C-125) (Bacillus halodurans).